The primary structure comprises 39 residues: Photosystem II reaction center protein L (39 aa).

A helical transmembrane segment spans residues 18 to 38 (SLYLGLLLVFVLGILFSSYFF).

This sequence belongs to the PsbL family. PSII is composed of 1 copy each of membrane proteins PsbA, PsbB, PsbC, PsbD, PsbE, PsbF, PsbH, PsbI, PsbJ, PsbK, PsbL, PsbM, PsbT, PsbX, PsbY, PsbZ, Psb30/Ycf12, peripheral proteins PsbO, CyanoQ (PsbQ), PsbU, PsbV and a large number of cofactors. It forms dimeric complexes.

The protein localises to the cellular thylakoid membrane. One of the components of the core complex of photosystem II (PSII). PSII is a light-driven water:plastoquinone oxidoreductase that uses light energy to abstract electrons from H(2)O, generating O(2) and a proton gradient subsequently used for ATP formation. It consists of a core antenna complex that captures photons, and an electron transfer chain that converts photonic excitation into a charge separation. This subunit is found at the monomer-monomer interface and is required for correct PSII assembly and/or dimerization. This is Photosystem II reaction center protein L from Trichormus variabilis (strain ATCC 29413 / PCC 7937) (Anabaena variabilis).